Consider the following 464-residue polypeptide: Argininosuccinate lyase (464 aa).

The protein belongs to the lyase 1 family. Argininosuccinate lyase subfamily.

Its subcellular location is the cytoplasm. It carries out the reaction 2-(N(omega)-L-arginino)succinate = fumarate + L-arginine. It participates in amino-acid biosynthesis; L-arginine biosynthesis; L-arginine from L-ornithine and carbamoyl phosphate: step 3/3. The sequence is that of Argininosuccinate lyase from Pseudomonas putida (strain W619).